Here is a 738-residue protein sequence, read N- to C-terminus: Photosystem I P700 chlorophyll a apoprotein A2 (738 aa).

The next 8 membrane-spanning stretches (helical) occupy residues 46 to 69 (LFST…FHIA), 135 to 158 (LYQG…LHLQ), 175 to 199 (LNHH…HVAI), 273 to 291 (IAHH…GHMY), 333 to 356 (LHFQ…QHMY), 372 to 398 (AALY…IFFI), 420 to 442 (AIIS…LYVH), and 521 to 539 (FLVH…LILV). [4Fe-4S] cluster-binding residues include C563 and C572. 2 helical membrane-spanning segments follow: residues 579-600 (AFYL…YWHW) and 647-669 (LAVW…MFLI). Residues H658, M666, and Y674 each coordinate chlorophyll a. W675 provides a ligand contact to phylloquinone. A helical transmembrane segment spans residues 711 to 731 (VVGLAHFTVGYVLTYGAFLIA).

The protein belongs to the PsaA/PsaB family. As to quaternary structure, the PsaA/B heterodimer binds the P700 chlorophyll special pair and subsequent electron acceptors. PSI consists of a core antenna complex that captures photons, and an electron transfer chain that converts photonic excitation into a charge separation. The cyanobacterial PSI reaction center is composed of one copy each of PsaA,B,C,D,E,F,I,J,K,L,M and X, and forms trimeric complexes. PSI electron transfer chain: 5 chlorophyll a, 1 chlorophyll a', 2 phylloquinones and 3 4Fe-4S clusters. PSI core antenna: 90 chlorophyll a, 22 carotenoids, 3 phospholipids and 1 galactolipid. P700 is a chlorophyll a/chlorophyll a' dimer, A0 is one or more chlorophyll a, A1 is one or both phylloquinones and FX is a shared 4Fe-4S iron-sulfur center. serves as cofactor.

Its subcellular location is the cellular thylakoid membrane. The enzyme catalyses reduced [plastocyanin] + hnu + oxidized [2Fe-2S]-[ferredoxin] = oxidized [plastocyanin] + reduced [2Fe-2S]-[ferredoxin]. PsaA and PsaB bind P700, the primary electron donor of photosystem I (PSI), as well as the electron acceptors A0, A1 and FX. PSI is a plastocyanin/cytochrome c6-ferredoxin oxidoreductase, converting photonic excitation into a charge separation, which transfers an electron from the donor P700 chlorophyll pair to the spectroscopically characterized acceptors A0, A1, FX, FA and FB in turn. Oxidized P700 is reduced on the lumenal side of the thylakoid membrane by plastocyanin or cytochrome c6. The protein is Photosystem I P700 chlorophyll a apoprotein A2 of Synechococcus sp. (strain CC9311).